The chain runs to 838 residues: Alpha-glucan phosphorylase, H isozyme (838 aa).

Residues 1 to 21 (MEGGAKSNDVSAAPIAQPLSE) form a disordered region. K684 is modified (N6-(pyridoxal phosphate)lysine).

It belongs to the glycogen phosphorylase family. The cofactor is pyridoxal 5'-phosphate.

It is found in the cytoplasm. It catalyses the reaction [(1-&gt;4)-alpha-D-glucosyl](n) + phosphate = [(1-&gt;4)-alpha-D-glucosyl](n-1) + alpha-D-glucose 1-phosphate. Phosphorylase is an important allosteric enzyme in carbohydrate metabolism. Enzymes from different sources differ in their regulatory mechanisms and in their natural substrates. However, all known phosphorylases share catalytic and structural properties. The protein is Alpha-glucan phosphorylase, H isozyme of Solanum tuberosum (Potato).